The primary structure comprises 86 residues: Probable weak neurotoxin NNAM2 (86 aa).

The N-terminal stretch at 1–21 (MKTLLLTLVVVTIVCLDLGYT) is a signal peptide. 5 disulfides stabilise this stretch: C24-C45, C27-C32, C38-C63, C67-C78, and C79-C84.

The protein belongs to the three-finger toxin family. Ancestral subfamily. Orphan group II sub-subfamily. As to expression, expressed by the venom gland.

It localises to the secreted. Functionally, binds with low affinity to muscular (alpha-1-beta-1-delta-epsilon/CHRNA1-CHRNB1-CHRND-CHRNE) and very low affinity to neuronal (alpha-7/CHRNA7) nicotinic acetylcholine receptor (nAChR). The chain is Probable weak neurotoxin NNAM2 from Naja atra (Chinese cobra).